A 658-amino-acid polypeptide reads, in one-letter code: Glycogen debranching enzyme (658 aa).

Catalysis depends on D336, which acts as the Nucleophile. The active-site Proton donor is the E371. The segment at 459–484 (EANGEENRDGTNSNYSDNHGKEGLGG) is disordered.

The protein belongs to the glycosyl hydrolase 13 family.

It carries out the reaction Hydrolysis of (1-&gt;6)-alpha-D-glucosidic linkages to branches with degrees of polymerization of three or four glucose residues in limit dextrin.. The protein operates within glycan degradation; glycogen degradation. Functionally, removes maltotriose and maltotetraose chains that are attached by 1,6-alpha-linkage to the limit dextrin main chain, generating a debranched limit dextrin. The protein is Glycogen debranching enzyme of Salmonella dublin (strain CT_02021853).